A 388-amino-acid chain; its full sequence is Probable peptidoglycan glycosyltransferase FtsW (388 aa).

Residues 1-19 (MMSPSTSAPHNQPIQPELD) lie on the Cytoplasmic side of the membrane. A helical membrane pass occupies residues 20-40 (VLLVSTVLLLLGLGLVMVYSA). Topologically, residues 41–55 (SIAIAEAKFGEGSSY) are periplasmic. Residues 56 to 76 (YFLARQASYILAGIAVGIGCF) form a helical membrane-spanning segment. Residues 77 to 89 (RIPLRWWQAYSHY) lie on the Cytoplasmic side of the membrane. The chain crosses the membrane as a helical span at residues 90-110 (LLGLGILLLLVVLIPGISHEI). At 111 to 116 (NGSRRW) the chain is on the periplasmic side. A helical transmembrane segment spans residues 117-137 (IPLGITSFQPSELMKLIILIF). The Cytoplasmic portion of the chain corresponds to 138–151 (TADYVVRKAAFKDH). Residues 152–172 (FFKGFLPILALLTIVSLLLLM) form a helical membrane-spanning segment. Topologically, residues 173 to 175 (EPD) are periplasmic. A run of 2 helical transmembrane segments spans residues 176 to 196 (LGAT…NGMS) and 197 to 217 (LKMF…LIII). The Periplasmic portion of the chain corresponds to 218 to 284 (EPYRMDRINA…DFMFAVLAEE (67 aa)). A helical membrane pass occupies residues 285–305 (LGFAGVVTVISLFFFLLVRIF). Over 306 to 324 (KVGRTAARLGDQFGSLVAQ) the chain is Cytoplasmic. The helical transmembrane segment at 325 to 345 (GIGVWLGLQAFINMGVNMGLL) threads the bilayer. Residues 346–351 (PTKGLT) lie on the Periplasmic side of the membrane. The helical transmembrane segment at 352 to 372 (LPFMSYGGSSIVINSIAIAIL) threads the bilayer. The Cytoplasmic portion of the chain corresponds to 373–388 (LRIDWENRLKRRGLNA).

Belongs to the SEDS family. FtsW subfamily.

It is found in the cell inner membrane. It carries out the reaction [GlcNAc-(1-&gt;4)-Mur2Ac(oyl-L-Ala-gamma-D-Glu-L-Lys-D-Ala-D-Ala)](n)-di-trans,octa-cis-undecaprenyl diphosphate + beta-D-GlcNAc-(1-&gt;4)-Mur2Ac(oyl-L-Ala-gamma-D-Glu-L-Lys-D-Ala-D-Ala)-di-trans,octa-cis-undecaprenyl diphosphate = [GlcNAc-(1-&gt;4)-Mur2Ac(oyl-L-Ala-gamma-D-Glu-L-Lys-D-Ala-D-Ala)](n+1)-di-trans,octa-cis-undecaprenyl diphosphate + di-trans,octa-cis-undecaprenyl diphosphate + H(+). It participates in cell wall biogenesis; peptidoglycan biosynthesis. Functionally, peptidoglycan polymerase that is essential for cell division. In Nitrosomonas europaea (strain ATCC 19718 / CIP 103999 / KCTC 2705 / NBRC 14298), this protein is Probable peptidoglycan glycosyltransferase FtsW.